Here is a 186-residue protein sequence, read N- to C-terminus: ATP synthase subunit b (186 aa).

A helical transmembrane segment spans residues 28 to 48 (IVWSIIPFAVILFVFAKVVLP).

This sequence belongs to the ATPase B chain family. As to quaternary structure, F-type ATPases have 2 components, F(1) - the catalytic core - and F(0) - the membrane proton channel. F(1) has five subunits: alpha(3), beta(3), gamma(1), delta(1), epsilon(1). F(0) has three main subunits: a(1), b(2) and c(10-14). The alpha and beta chains form an alternating ring which encloses part of the gamma chain. F(1) is attached to F(0) by a central stalk formed by the gamma and epsilon chains, while a peripheral stalk is formed by the delta and b chains.

The protein localises to the cell membrane. F(1)F(0) ATP synthase produces ATP from ADP in the presence of a proton or sodium gradient. F-type ATPases consist of two structural domains, F(1) containing the extramembraneous catalytic core and F(0) containing the membrane proton channel, linked together by a central stalk and a peripheral stalk. During catalysis, ATP synthesis in the catalytic domain of F(1) is coupled via a rotary mechanism of the central stalk subunits to proton translocation. Functionally, component of the F(0) channel, it forms part of the peripheral stalk, linking F(1) to F(0). The chain is ATP synthase subunit b from Corynebacterium urealyticum (strain ATCC 43042 / DSM 7109).